Reading from the N-terminus, the 454-residue chain is Innexin-19 (454 aa).

At 1–48 (MWRTPASTGPLRQDRQMFFHATLARSFINALSVRGDDDAVDRLNYYYT) the chain is on the cytoplasmic side. A helical membrane pass occupies residues 49-69 (PLILAVCCLVISAKQYGGTPI). The Extracellular segment spans residues 70-118 (ECWVNPHSRESMEEYIESYCWIQNTYWIPMYENVPDDHTAREEKQIGYY). Residues 119 to 139 (QWVPFILIAEALMFSLPCIFW) form a helical membrane-spanning segment. Over 140 to 214 (RLCSFQSGLN…SRFLSGQCLS (75 aa)) the chain is Cytoplasmic. The helical transmembrane segment at 215–235 (ILHSFTKLLYSMNVVAQFLIL) threads the bilayer. At 236–300 (NACLKSSDFL…ALLINIINEK (65 aa)) the chain is on the extracellular side. A helical transmembrane segment spans residues 301–321 (VFAFLWCWYMILAIITTCSFI). Residues 322–454 (YWIANSFIHS…SNPGQTKSFL (133 aa)) lie on the Cytoplasmic side of the membrane.

This sequence belongs to the pannexin family. In terms of tissue distribution, specifically expressed in sensory neurons and interneurons in the head and tail. Expressed in neurons AWC, ASH, AFD, ASI, ADL, ASK, BAG, AWB, and ADF (head sensory neurons); ADA, AIZ, RIC, AIY, and AIM (head interneurons); PHA and PHB (tail sensory neurons); and PVC and PVQ (tail interneurons).

It localises to the cell membrane. Its subcellular location is the cell junction. It is found in the gap junction. Structural component of the gap junctions that specifically coordinates left-right asymmetry in the developing nervous system. Acts by forming gap junction network linking embryonic neurons and providing electrical coupling between cells, leading to promote or inhibit AWC signaling. Required for the left and right AWC olfactory neurons to establish asymmetric patterns of gene expression during embryogenesis. Acts autonomously. The sequence is that of Innexin-19 (inx-19) from Caenorhabditis elegans.